A 117-amino-acid chain; its full sequence is cAMP-regulated phosphoprotein 19-B (117 aa).

A compositionally biased stretch (basic and acidic residues) spans 1-37 (MSRDNQEIKAPEESSAEEQKEMDDKVTSPEKAEEIKL). Residues 1–54 (MSRDNQEIKAPEESSAEEQKEMDDKVTSPEKAEEIKLKSRYPNIGPKPGGSDFL) are disordered. The residue at position 28 (S28) is a Phosphoserine; by CDK2. S67 is subject to Phosphoserine; by GWL. The tract at residues 77–117 (MKNKQLPTAAPDKTEVTGDHIPTPQDLPQRKPSLVASKLAG) is disordered. T99 is subject to Phosphothreonine; by CDK2. The residue at position 109 (S109) is a Phosphoserine; by PKA.

This sequence belongs to the endosulfine family. Interacts (when phosphorylated at Ser-67) with ppp2r2d. In terms of processing, phosphorylation at Ser-67 by gwl during mitosis is essential for interaction with ppp2r2d (PR55-delta) and subsequent inactivation of PP2A.

Its subcellular location is the cytoplasm. In terms of biological role, protein phosphatase inhibitor that specifically inhibits protein phosphatase 2A (PP2A) during mitosis. When phosphorylated at Ser-67 during mitosis, specifically interacts with ppp2r2d (PR55-delta) and inhibits its activity, leading to inactivation of PP2A, an essential condition to keep cyclin-B1-CDK1 activity high during M phase. This is cAMP-regulated phosphoprotein 19-B (arpp19-b) from Xenopus laevis (African clawed frog).